We begin with the raw amino-acid sequence, 267 residues long: L-aspartate dehydrogenase 2 (267 aa).

NAD(+) is bound by residues alanine 123 and asparagine 189. Histidine 219 is a catalytic residue.

The protein belongs to the L-aspartate dehydrogenase family.

The enzyme catalyses L-aspartate + NADP(+) + H2O = oxaloacetate + NH4(+) + NADPH + H(+). The catalysed reaction is L-aspartate + NAD(+) + H2O = oxaloacetate + NH4(+) + NADH + H(+). It functions in the pathway cofactor biosynthesis; NAD(+) biosynthesis; iminoaspartate from L-aspartate (dehydrogenase route): step 1/1. In terms of biological role, specifically catalyzes the NAD or NADP-dependent dehydrogenation of L-aspartate to iminoaspartate. The polypeptide is L-aspartate dehydrogenase 2 (Bordetella pertussis (strain Tohama I / ATCC BAA-589 / NCTC 13251)).